The sequence spans 601 residues: RNA polymerase II C-terminal domain phosphatase-like 5 (601 aa).

The disordered stretch occupies residues 1-20 (MFVAKNLSPERESKRQKKEP). Positions 8 to 20 (SPERESKRQKKEP) are enriched in basic and acidic residues. FCP1 homology domains are found at residues 84–259 (LNMK…TDES) and 381–553 (LNEK…DESE).

Expressed in roots, seedlings, hypocotyls, cotyledons, leaves, siliques and flowers.

It localises to the nucleus. It carries out the reaction O-phospho-L-seryl-[protein] + H2O = L-seryl-[protein] + phosphate. It catalyses the reaction O-phospho-L-threonyl-[protein] + H2O = L-threonyl-[protein] + phosphate. Mediates the dephosphorylation of 'Ser-2' of the heptad repeats YSPTSPS in the C-terminal domain of the largest RNA polymerase II subunit (RPB1). This promotes the activity of RNA polymerase II. Positively regulates abscisic acid (ABA) and drought responses, including the regulation of specific genes expression. The chain is RNA polymerase II C-terminal domain phosphatase-like 5 from Arabidopsis thaliana (Mouse-ear cress).